The sequence spans 134 residues: Large-conductance mechanosensitive channel (134 aa).

Helical transmembrane passes span 10–30 (FAMR…GAFG) and 76–96 (GAFL…FVVI).

The protein belongs to the MscL family. As to quaternary structure, homopentamer.

Its subcellular location is the cell inner membrane. Its function is as follows. Channel that opens in response to stretch forces in the membrane lipid bilayer. May participate in the regulation of osmotic pressure changes within the cell. This is Large-conductance mechanosensitive channel from Prosthecochloris aestuarii (strain DSM 271 / SK 413).